A 363-amino-acid chain; its full sequence is 3-dehydroquinate synthase (363 aa).

NAD(+) contacts are provided by residues 75–80, 109–113, 133–134, lysine 146, lysine 155, and 173–176; these read DAEEGK, GAVTD, TS, and TLST. Residues glutamate 188, histidine 251, and histidine 267 each contribute to the Zn(2+) site.

It belongs to the sugar phosphate cyclases superfamily. Dehydroquinate synthase family. Requires Co(2+) as cofactor. The cofactor is Zn(2+). It depends on NAD(+) as a cofactor.

The protein localises to the cytoplasm. It carries out the reaction 7-phospho-2-dehydro-3-deoxy-D-arabino-heptonate = 3-dehydroquinate + phosphate. The protein operates within metabolic intermediate biosynthesis; chorismate biosynthesis; chorismate from D-erythrose 4-phosphate and phosphoenolpyruvate: step 2/7. Catalyzes the conversion of 3-deoxy-D-arabino-heptulosonate 7-phosphate (DAHP) to dehydroquinate (DHQ). The polypeptide is 3-dehydroquinate synthase (Arthrobacter sp. (strain FB24)).